The chain runs to 1413 residues: MSLSSGACGGKGVDANPVETYDSGDEWDIGVGNLIIDLDADLEKDQQKLEMSGSKEVGIPAPNAVATLPDNIKFVTPVPGPQGKEGKSKSKRSKSGKDASKPTPGTSLFSPSEGAASKKEVQGRAGDGASAGGLVAAVAPKGSEKAAKASRSVAGSKKEKENSSSKGKKERSEGVGTCSEKDPGVLQPVPLGGRGSQYDGSAGMDTGTVEPLGSIAIEPGAALNPLGTKPEPEEGENECRPLKKVKSEKMESPVSTPAVLPLHLLVPVVNNDISSPCEQIMVRTRSVGVNTCDVALATEPECLGPCEPGTSVNLEGIVWQETEDGMLVVNVTWRNKTYVGTLLDCTRHDWAPPRFCDSPTSDLEMRNGRGRGKRMRPSSNTPVSEAAAASDSKGTSSSSKTRAGANSKGRRGSQNSSEHRPPASSTSEDVKASPSSANKRKSKPLSDMELNSSSEDSKGSKRVRTNSMGSATGPLPGTKVEPTLVDRNCPSPVLIDCPHPNCNKKYKHINGLKYHQAHAHTDDDSKPEADGDSEYGEEPALHADLSCNGAPVPQKGSLSPARSATPKVRLVEPHSPSPSSKFSTKGLCKKKLSGEGDTDPGALSNDGSDDGPSVMDETSNDAFDSLERKCMEKEKCKKPSSLKSEKIPSKSLKSARPIAPAIPPQQIYTFQTATFTAASPGSSSGLTTTVVQAMPNSPQLKPIQPKPTVMGEPFTVNPALTPAKDKKKKDKKKKDSSKELESPLTPGKVCRAEEGKSPFRDAAGDGIKVESLLNGSSESHQSRLASIKAEADKIYSFTDNAPSPSIGGSSRLDSTTPTQPLTPLHVVTQNGAEASSVKTNSPAYSDISDAGEDGEGKVDSAKSKDPEQLVKEGAKKTLFPPQPQSKDSPYYQGFESYYSPGYAQSSPGTLTSSSQAGMEGQPLKTKKDEEPESVEGKVKNDVCEEKKPELSNSSQQPSVIQQRPNMYMQSLYYNQYAYVPPYGYSDQSYHSHLLSTNTAYRQQYEEQQKRQSLEQQQQQQRGLDKKTEMGLKEREASLKEEWKQKPSIPPTLTKAPSLTDLVKSGPGKAKEPGTDPAKSVIIPKLDDSSKLPSQPPEGLKGKLGEASHLGKEASEAKTGTECGRQAEVDPILWYRQETESRMWTYVYPAKYSDIKSEDDRWKEERDRKLKEDRSRSKDSVPKEDGKESTSSDCKLPPSEESRLGSKEPRPSVHVPVSSPLTQHQSYIPYMHGYSYSQSYDPNHPSYRGMPAVMMQNYPGSYLPSSYSFSPYGSKVSGGEDADKARASPSVSCKASSESKALDILQQHASHYKSKSPTISDKNSQERDRGGCGVVGGGGSCGSVAGAGGTDRSADRPRTSPSQRLMSTHHHHHHLGYSLLPAQYNLPYAAGLSSTAIVASQQGSTPSLYPPPRR.

Disordered regions lie at residues 1–26 (MSLS…SGDE), 47–196 (QKLE…GRGS), 354–484 (RFCD…EPTL), 517–659 (AHAH…RPIA), and 695–765 (PNSP…AAGD). Residues Ser358, Ser361, and Ser379 each carry the phosphoserine modification. Thr381 bears the Phosphothreonine mark. Positions 386 to 405 (AAAASDSKGTSSSSKTRAGA) are enriched in low complexity. 6 positions are modified to phosphoserine: Ser413, Ser433, Ser446, Ser452, Ser467, and Ser470. A compositionally biased stretch (polar residues) spans 423 to 437 (ASSTSEDVKASPSSA). Lys479 is covalently cross-linked (Glycyl lysine isopeptide (Lys-Gly) (interchain with G-Cter in SUMO2)). The C2H2-type zinc finger occupies 495-520 (IDCPHPNCNKKYKHINGLKYHQAHAH). The segment covering 519–529 (AHTDDDSKPEA) has biased composition (basic and acidic residues). A phosphoserine mark is found at Ser533, Ser575, and Ser577. Positions 625 to 648 (SLERKCMEKEKCKKPSSLKSEKIP) are enriched in basic and acidic residues. The segment covering 725–735 (DKKKKDKKKKD) has biased composition (basic residues). Ser742 is modified (phosphoserine). Position 745 is a phosphothreonine (Thr745). Residues 750–763 (CRAEEGKSPFRDAA) show a composition bias toward basic and acidic residues. The residue at position 757 (Ser757) is a Phosphoserine. Residue Lys788 forms a Glycyl lysine isopeptide (Lys-Gly) (interchain with G-Cter in SUMO2) linkage. Over residues 797-843 (FTDNAPSPSIGGSSRLDSTTPTQPLTPLHVVTQNGAEASSVKTNSPA) the composition is skewed to polar residues. Disordered stretches follow at residues 797 to 962 (FTDN…VIQQ), 1004 to 1127 (YEEQ…RQAE), 1154 to 1221 (IKSE…SPLT), and 1273 to 1369 (SKVS…STHH). A Phosphoserine modification is found at Ser803. Thr822 carries the post-translational modification Phosphothreonine. Residues Ser841, Ser845, and Ser848 each carry the phosphoserine modification. A compositionally biased stretch (basic and acidic residues) spans 854–875 (GEGKVDSAKSKDPEQLVKEGAK). The span at 902-916 (YAQSSPGTLTSSSQA) shows a compositional bias: polar residues. Basic and acidic residues predominate over residues 925 to 949 (TKKDEEPESVEGKVKNDVCEEKKPE). Polar residues predominate over residues 950 to 962 (LSNSSQQPSVIQQ). Residues 1022 to 1044 (GLDKKTEMGLKEREASLKEEWKQ) are compositionally biased toward basic and acidic residues. Phosphoserine is present on Ser1057. Lys1063 is covalently cross-linked (Glycyl lysine isopeptide (Lys-Gly) (interchain with G-Cter in SUMO2)). 3 stretches are compositionally biased toward basic and acidic residues: residues 1099–1115 (LKGK…EASE), 1154–1189 (IKSE…KEST), and 1197–1210 (PSEE…EPRP). Lys1155 is covalently cross-linked (Glycyl lysine isopeptide (Lys-Gly) (interchain with G-Cter in SUMO2)). Residues 1288–1298 (PSVSCKASSES) are compositionally biased toward polar residues. Residue Lys1299 forms a Glycyl lysine isopeptide (Lys-Gly) (interchain with G-Cter in SUMO2) linkage. Over residues 1330–1348 (GCGVVGGGGSCGSVAGAGG) the composition is skewed to gly residues.

In terms of assembly, interacts (via N-terminus) with NIPBL. Interacts with the multiprotein complex Integrator. As to expression, expressed in myoblasts. Expressed in neurons in various brain regions, including striatum, prefrontal cortex, olfactory bulb, midbrain, cerebellum and hippocampus. Expressed in neural stem cells (at protein level). Expressed in thymocytes.

It is found in the nucleus. Its function is as follows. Transcription factor, which activates RAG1, and possibly RAG2, transcription. Through the regulation of RAG1/2 expression, may regulate thymocyte maturation. Along with NIPBL and the multiprotein complex Integrator, promotes cortical neuron migration during brain development by regulating the transcription of crucial genes in this process. Preferentially binds promoters containing paused RNA polymerase II. Up-regulates the expression of SEMA3A, NRP1, PLXND1 and GABBR2 genes, among others. Involved in regulation of myoblast proliferation during myogenesis. This chain is Zinc finger protein 609 (Znf609), found in Mus musculus (Mouse).